The sequence spans 239 residues: Ribosomal RNA small subunit methyltransferase G (239 aa).

Residues Gly-78, Phe-83, 129-130 (AE), and Arg-148 each bind S-adenosyl-L-methionine.

Belongs to the methyltransferase superfamily. RNA methyltransferase RsmG family.

It localises to the cytoplasm. Specifically methylates the N7 position of a guanine in 16S rRNA. The protein is Ribosomal RNA small subunit methyltransferase G of Desulfitobacterium hafniense (strain Y51).